The sequence spans 277 residues: Large ribosomal subunit protein uL2 (277 aa).

The disordered stretch occupies residues 226 to 277 (NPIDHPHGGGEGRTSGGRHPVTPWGKPTKGKKTRSNKSTNKFILISRHKRKK).

The protein belongs to the universal ribosomal protein uL2 family. As to quaternary structure, part of the 50S ribosomal subunit. Forms a bridge to the 30S subunit in the 70S ribosome.

One of the primary rRNA binding proteins. Required for association of the 30S and 50S subunits to form the 70S ribosome, for tRNA binding and peptide bond formation. It has been suggested to have peptidyltransferase activity; this is somewhat controversial. Makes several contacts with the 16S rRNA in the 70S ribosome. The sequence is that of Large ribosomal subunit protein uL2 from Rhodopseudomonas palustris (strain BisA53).